The sequence spans 282 residues: MERNVILAKNAGFCFGVKRAVDEAIKYQKEFGKKIYTLGPLIHNNDVVNYLEDNDIFAIELSDADSLKKGDVVLIRSHGVKESVIKDLTDKGLIVKNATCPYVTNIQLKVKKCYEQGYKIIIVGDENHPEVIGINGWCNDSAIITNGKTELENIPAKVCVVSQTTEKKETWNKVLNEIVRASKEIVAFNTICSATDVRQKSVQELSKEADLVFVIGGKNSSNTTKLYEICKKECPKSYHIENVKELDESLLEDESVKTIGITAGASTPDWIINEVISKIKEL.

Cysteine 14 serves as a coordination point for [4Fe-4S] cluster. (2E)-4-hydroxy-3-methylbut-2-enyl diphosphate is bound by residues histidine 43 and histidine 78. Histidine 43 and histidine 78 together coordinate dimethylallyl diphosphate. Residues histidine 43 and histidine 78 each coordinate isopentenyl diphosphate. A [4Fe-4S] cluster-binding site is contributed by cysteine 100. Histidine 128 is a (2E)-4-hydroxy-3-methylbut-2-enyl diphosphate binding site. Histidine 128 serves as a coordination point for dimethylallyl diphosphate. Histidine 128 lines the isopentenyl diphosphate pocket. Residue glutamate 130 is the Proton donor of the active site. Threonine 164 is a (2E)-4-hydroxy-3-methylbut-2-enyl diphosphate binding site. Cysteine 192 provides a ligand contact to [4Fe-4S] cluster. Residues serine 220, serine 221, asparagine 222, and serine 266 each contribute to the (2E)-4-hydroxy-3-methylbut-2-enyl diphosphate site. Dimethylallyl diphosphate-binding residues include serine 220, serine 221, asparagine 222, and serine 266. Isopentenyl diphosphate contacts are provided by serine 220, serine 221, asparagine 222, and serine 266.

Belongs to the IspH family. It depends on [4Fe-4S] cluster as a cofactor.

It carries out the reaction isopentenyl diphosphate + 2 oxidized [2Fe-2S]-[ferredoxin] + H2O = (2E)-4-hydroxy-3-methylbut-2-enyl diphosphate + 2 reduced [2Fe-2S]-[ferredoxin] + 2 H(+). The enzyme catalyses dimethylallyl diphosphate + 2 oxidized [2Fe-2S]-[ferredoxin] + H2O = (2E)-4-hydroxy-3-methylbut-2-enyl diphosphate + 2 reduced [2Fe-2S]-[ferredoxin] + 2 H(+). It functions in the pathway isoprenoid biosynthesis; dimethylallyl diphosphate biosynthesis; dimethylallyl diphosphate from (2E)-4-hydroxy-3-methylbutenyl diphosphate: step 1/1. Its pathway is isoprenoid biosynthesis; isopentenyl diphosphate biosynthesis via DXP pathway; isopentenyl diphosphate from 1-deoxy-D-xylulose 5-phosphate: step 6/6. In terms of biological role, catalyzes the conversion of 1-hydroxy-2-methyl-2-(E)-butenyl 4-diphosphate (HMBPP) into a mixture of isopentenyl diphosphate (IPP) and dimethylallyl diphosphate (DMAPP). Acts in the terminal step of the DOXP/MEP pathway for isoprenoid precursor biosynthesis. In Clostridium perfringens (strain ATCC 13124 / DSM 756 / JCM 1290 / NCIMB 6125 / NCTC 8237 / Type A), this protein is 4-hydroxy-3-methylbut-2-enyl diphosphate reductase.